The primary structure comprises 212 residues: Methylthioribulose-1-phosphate dehydratase (212 aa).

Zn(2+) is bound by residues His-97 and His-99.

It belongs to the aldolase class II family. MtnB subfamily. In terms of assembly, homotetramer. It depends on Zn(2+) as a cofactor.

It carries out the reaction 5-(methylsulfanyl)-D-ribulose 1-phosphate = 5-methylsulfanyl-2,3-dioxopentyl phosphate + H2O. It functions in the pathway amino-acid biosynthesis; L-methionine biosynthesis via salvage pathway; L-methionine from S-methyl-5-thio-alpha-D-ribose 1-phosphate: step 2/6. Catalyzes the dehydration of methylthioribulose-1-phosphate (MTRu-1-P) into 2,3-diketo-5-methylthiopentyl-1-phosphate (DK-MTP-1-P). This is Methylthioribulose-1-phosphate dehydratase from Bacillus thuringiensis subsp. konkukian (strain 97-27).